Reading from the N-terminus, the 141-residue chain is Large ribosomal subunit protein uL11 (141 aa).

The protein belongs to the universal ribosomal protein uL11 family. Part of the ribosomal stalk of the 50S ribosomal subunit. Interacts with L10 and the large rRNA to form the base of the stalk. L10 forms an elongated spine to which L12 dimers bind in a sequential fashion forming a multimeric L10(L12)X complex. Post-translationally, one or more lysine residues are methylated.

In terms of biological role, forms part of the ribosomal stalk which helps the ribosome interact with GTP-bound translation factors. The protein is Large ribosomal subunit protein uL11 of Brevibacillus brevis (strain 47 / JCM 6285 / NBRC 100599).